Consider the following 1045-residue polypeptide: MKCSYTVVFLLFYLLIASFHVDALSWAAWSPWSSCTKTCGGGVSRQLRRCLTSKCSGESVRFKVCAQKTCESKSRLARDTICGGEEIVSRGQCEVVCRSRLTGANFLWRVDDGTPCQAATSRAVCSKGSCQIVGCDGLISSSFRFDACGVCGGRGDTCDNGKFIWKVSEEYTACASNCDDIVDWSGAGRSIASTSQPIVVCVNAITGRVVPEKLCADKLRPKVEARPCPMLICPSRCRWMAADWTECVPHCGEGTRKREVYCVQTAHNVTVHVPDTFCENGTRPAAEENCVSTSCGRWEAGKWSKCTASCGQGVRRRHVACVGGSDCDEGGRPRQETTCYAGIPCSIATNSLDWNDRAYLDGNTFGSMDNHNDWQAPRLVAGEWSTCSSTCGTGVMSRTVECVAVNPISSAPIKLPMSECQDQEQPKLFESCEVRSCPLQEDSKLSEDEAPYQWRYGDWTQCSASCLGGKQKAALKCIQVSTGKSVQWSQCDARRRPPEKSRPCNQHPCPPFWLTSKYSDCSMSCGSGTARRSVKCAQTVSKTDGADAHIVLRDDRCHFKKPQETETCNVVACPATWVTAQWTECSRSCDSGERRRQVWCEIRDSRGKTQRRPDVECDANTKPQTVEVCSFGSCSRPELLSNRVFEQNAEQKKLTLGIGGVATLYQGTSIKIKCPAKKFDKKKIYWKKNGKKIKNDAHIKVSANGNLRVFHARMEDAGVYECFTDRLQGNVTLNFKYRDFPASRVDLAPKPQIPSTKNRQRVQVSKEDVLREQASVLHKMNVSLIEALLTAPNDEKAREQLRKYGNELVARWDIGHWSECRQKTCHVAGYQARGISCKVTFHGEIRNVDNSICESLASVRPPETRPCHREDCPRWEASQWSECSSQRCVSSMLAQKRRNVTCRFTNGTSVDIQHCDITNRPATTMDCPNQNCKAEWRTSDWGSCSSECGTGGVQLRLLSCVWISSGRPAGRNCEQMRRPHSARACVADEPLPPCMPTASALYQRDASCQDQSRFCDIIKLFHSCDSLEVRQKCCSTCTFVERKKF.

The signal sequence occupies residues 1-23 (MKCSYTVVFLLFYLLIASFHVDA). 5 consecutive TSP type-1 domains span residues 24-71 (LSWA…KTCE), 236-292 (RCRW…NCVS), 294-510 (SCGR…HPCP), 512-572 (FWLT…NVVA), and 576-635 (TWVT…GSCS). 3 cysteine pairs are disulfide-bonded: cysteine 35–cysteine 65, cysteine 39–cysteine 70, and cysteine 50–cysteine 55. N-linked (GlcNAc...) asparagine glycans are attached at residues asparagine 268 and asparagine 280. The 96-residue stretch at 637–732 (PELLSNRVFE…FTDRLQGNVT (96 aa)) folds into the Ig-like C2-type domain. The cysteines at positions 674 and 722 are disulfide-linked. 2 N-linked (GlcNAc...) asparagine glycosylation sites follow: asparagine 730 and asparagine 781. The TSP type-1 6 domain occupies 811–873 (RWDIGHWSEC…TRPCHREDCP (63 aa)). 2 N-linked (GlcNAc...) asparagine glycosylation sites follow: asparagine 899 and asparagine 906. In terms of domain architecture, TSP type-1 7 spans 932–990 (CKAEWRTSDWGSCSSECGTGGVQLRLLSCVWISSGRPAGRNCEQMRRPHSARACVADEP). Residues 1004 to 1041 (RDASCQDQSRFCDIIKLFHSCDSLEVRQKCCSTCTFVE) form the PLAC domain.

In terms of assembly, interacts with eva-1 (via the SUEL-type lectin domain). Interacts with unc-5. Interacts with unc-40; the interaction is required for the localization of unc-40 to postsynaptic domains. Isoform a forms homodimers and heterodimers with isoform b. Isoform b forms homodimers and heterodimers with isoform a. Isoform b interacts with nlg-1 (via extracellular domain); the interaction is required for nlg-1 localization to postsynaptic domains. Isoform b interacts (via the Ig-like C2-type domain) with nrx-1 (via C-terminus). Isoform a: Expressed in the commissural GABAergic and cholinergic motor neurons in the first larval stage but only in the cholinergic motor neurons in later larval stages and in adult animals. At the L1 larval stage, mainly localized at the nerve ring and at the dorsal cord. Isoform b: Expressed in the commissural GABAergic and cholinergic motor neurons whose cell bodies reside in the ventral nerve cord and which extend axons into the ventral and dorsal nerve cord. Also expressed in the head neurons RIA, RIC, lateral IL1s, lateral IL2s, OLLs, RMEs and SABs, all of which extend axons into the nerve ring. Expressed in the embryogenic blast cells and the corresponding terminally differentiated ventral cord motor neurons and head neurons.

Its subcellular location is the cell projection. The protein localises to the axon. It localises to the secreted. It is found in the synapse. The protein resides in the extracellular space. Its subcellular location is the extracellular matrix. Functionally, component of an extracellular matrix cue that is involved in the guidance of dorsoventral midline migrations and in the specification of postsynaptic domains at neuromuscular junctions (NMJs). Acts as a ligand for the netrin receptor unc-40 and the neuroligin receptor nlg-1. Secreted by the dorsal and ventral nerve cords to attract sensory axons and muscle membrane extensions called muscle arms. In parallel with unc-6 and slt-1, involved in the netrin receptor unc-40 dependent guidance of the AVM and PVM mechanosensory axons along the dorsal-ventral axis. The unc-40 coreceptor eva-1 is enhancing the responsiveness of unc-40 to the madd-4 guidance cue to attract the muscle arm extensions and AVM mechanosensory axons towards the dorsoventral midline. Acts as a synaptic organizer and is required for the specification of inhibitory GABAergic and excitatory cholinergic identities of postsynaptic domains at neuromuscular junctions (NMJs). Required for the recruitment of unc-40 to both cholinergic and GABAergic NMJs. Promotes the clustering of ACh receptors and GABA(A) receptors at postsynaptic sites during synaptogenesis. The binding to the presynaptic adhesion protein nrx-1 and to the neuroligin nlg-1 at postsynaptic sites promotes clustering of GABAergic receptors at postsynaptic NMJs, thereby contributing to normal GABAergic synaptic transmission. In terms of biological role, isoform a and isoform c: Promotes the clustering of acetylcholine receptors (AChR) at excitatory cholinergic synapses of NMJs via the netrin receptor unc-40. Its function is as follows. Acts as a guidance cue in the attraction of muscle membrane extensions (muscle arms) to the dorsal cord and in cooperation with unc-6 to the ventral cord via the netrin receptor unc-40 and via the unc-40 coreceptor eva-1. Together with nrx-1, clusters netrin receptor unc-40 and neuroligin nlg-1 at postsynaptic sites of GABAergic NMJs, thereby promoting the recruitment of GABA(A) receptors at GABAergic synapses. Prevents the recruitment of GABAergic receptors to cholinergic synapses. The polypeptide is Protein madd-4 (Caenorhabditis elegans).